A 625-amino-acid chain; its full sequence is UvrABC system protein C (625 aa).

In terms of domain architecture, GIY-YIG spans 13–92 (DKPGVYIMKD…IKKHRPKFNI (80 aa)). The UVR domain maps to 204-239 (EDIIKKLEKDMKEAADNLEFERAARIRDKINSLKHI).

The protein belongs to the UvrC family. Interacts with UvrB in an incision complex.

The protein resides in the cytoplasm. Its function is as follows. The UvrABC repair system catalyzes the recognition and processing of DNA lesions. UvrC both incises the 5' and 3' sides of the lesion. The N-terminal half is responsible for the 3' incision and the C-terminal half is responsible for the 5' incision. This chain is UvrABC system protein C, found in Acetivibrio thermocellus (strain ATCC 27405 / DSM 1237 / JCM 9322 / NBRC 103400 / NCIMB 10682 / NRRL B-4536 / VPI 7372) (Clostridium thermocellum).